The following is a 314-amino-acid chain: Methionyl-tRNA formyltransferase (314 aa).

113 to 116 lines the (6S)-5,6,7,8-tetrahydrofolate pocket; it reads SLLP.

The protein belongs to the Fmt family.

The enzyme catalyses L-methionyl-tRNA(fMet) + (6R)-10-formyltetrahydrofolate = N-formyl-L-methionyl-tRNA(fMet) + (6S)-5,6,7,8-tetrahydrofolate + H(+). Attaches a formyl group to the free amino group of methionyl-tRNA(fMet). The formyl group appears to play a dual role in the initiator identity of N-formylmethionyl-tRNA by promoting its recognition by IF2 and preventing the misappropriation of this tRNA by the elongation apparatus. This chain is Methionyl-tRNA formyltransferase, found in Pseudomonas savastanoi pv. phaseolicola (strain 1448A / Race 6) (Pseudomonas syringae pv. phaseolicola (strain 1448A / Race 6)).